Consider the following 133-residue polypeptide: ATP synthase epsilon chain, chloroplastic (133 aa).

The protein belongs to the ATPase epsilon chain family. As to quaternary structure, F-type ATPases have 2 components, CF(1) - the catalytic core - and CF(0) - the membrane proton channel. CF(1) has five subunits: alpha(3), beta(3), gamma(1), delta(1), epsilon(1). CF(0) has three main subunits: a, b and c.

Its subcellular location is the plastid. It is found in the chloroplast thylakoid membrane. Functionally, produces ATP from ADP in the presence of a proton gradient across the membrane. The polypeptide is ATP synthase epsilon chain, chloroplastic (Daucus carota (Wild carrot)).